A 340-amino-acid polypeptide reads, in one-letter code: Short-chain dehydrogenase/reductase ffsI (340 aa).

Leu46, Arg71, Asp96, Asn123, Tyr211, and Lys215 together coordinate NADP(+). The Proton acceptor role is filled by Tyr211. Lys215 functions as the Lowers pKa of active site Tyr in the catalytic mechanism.

Belongs to the short-chain dehydrogenases/reductases (SDR) family.

The protein operates within mycotoxin biosynthesis. Its function is as follows. Short-chain dehydrogenase/reductase; part of the gene cluster that mediates the biosynthesis of the cytotoxic leucine-containing cytochalasans, including aspochalasin C, aspochalasin E, TMC-169, flavichalasine F, aspergillin PZ, aspochalasin M and flavichalasine G. The first step in the pathway is catalyzed by the hybrid PKS-NRPS ffsA that utilizes 8 units of malonyl-CoA to iteratively assemble the octaketide chain before addition of L-leucine by the C-terminal NRPS modules. Because ffsA lacks a designated enoylreductase (ER) domain, the required activity is provided the enoyl reductase fssC. The methyltransferase (MT) domain of ffsA catalyzes the alpha-methylation at C10 and C14 using S-adenosyl-L-methionine as the methyl-donating cosubstrate. Reduction by the hydrolyase ffsE, followed by dehydration and intra-molecular Diels-Alder cyclization by the Diels-Alderase ffsF then yield the required isoindolone-fused macrocycle. A number of oxidative steps catalyzed by the tailoring cytochrome P450 monooxygenase ffsD, the FAD-linked oxidoreductase ffsJ and the short-chain dehydrogenase/reductase ffsI, are further required to afford the final products. The chain is Short-chain dehydrogenase/reductase ffsI from Aspergillus flavipes.